A 754-amino-acid polypeptide reads, in one-letter code: Polyribonucleotide nucleotidyltransferase (754 aa).

Positions 525 and 531 each coordinate Mg(2+). In terms of domain architecture, KH spans 591–650; that stretch reads PRITTIKVPVDKIGEVIGPKGKMINSITEETGASISIEDDGTVFVGASNGEAAQAAIDKI. Residues 662 to 731 form the S1 motif domain; sequence GERFLGTVVK…NRGKISLVLV (70 aa).

It belongs to the polyribonucleotide nucleotidyltransferase family. Mg(2+) serves as cofactor.

It is found in the cytoplasm. It catalyses the reaction RNA(n+1) + phosphate = RNA(n) + a ribonucleoside 5'-diphosphate. Functionally, involved in mRNA degradation. Catalyzes the phosphorolysis of single-stranded polyribonucleotides processively in the 3'- to 5'-direction. The polypeptide is Polyribonucleotide nucleotidyltransferase (Mycolicibacterium vanbaalenii (strain DSM 7251 / JCM 13017 / BCRC 16820 / KCTC 9966 / NRRL B-24157 / PYR-1) (Mycobacterium vanbaalenii)).